We begin with the raw amino-acid sequence, 93 residues long: Large ribosomal subunit protein uL23 (93 aa).

It belongs to the universal ribosomal protein uL23 family. Part of the 50S ribosomal subunit. Contacts protein L29, and trigger factor when it is bound to the ribosome.

One of the early assembly proteins it binds 23S rRNA. One of the proteins that surrounds the polypeptide exit tunnel on the outside of the ribosome. Forms the main docking site for trigger factor binding to the ribosome. This is Large ribosomal subunit protein uL23 from Campylobacter hominis (strain ATCC BAA-381 / DSM 21671 / CCUG 45161 / LMG 19568 / NCTC 13146 / CH001A).